Reading from the N-terminus, the 149-residue chain is Small ribosomal subunit protein uS17c (149 aa).

The transit peptide at 1–49 directs the protein to the chloroplast; that stretch reads MITSSLTSSLQALKLSSPFAHGSTPLSSLSKPNSFPNHRMPALVPVIRA.

Belongs to the universal ribosomal protein uS17 family. Part of the 30S ribosomal subunit.

The protein localises to the plastid. It is found in the chloroplast. One of the primary rRNA binding proteins, it binds specifically to the 5'-end of 16S ribosomal RNA. Required for optimal plastid performance in terms of photosynthesis and growth. Required for the translation of plastid mRNAs. Plays a critical role in biosynthesis of thylakoid membrane proteins encoded by chloroplast genes. This is Small ribosomal subunit protein uS17c (RPS17) from Arabidopsis thaliana (Mouse-ear cress).